A 228-amino-acid chain; its full sequence is Putative lipoprotein LprH (228 aa).

The first 27 residues, 1–27, serve as a signal peptide directing secretion; it reads MACLGRPGCRGWAGASLVLVVVLALAA. A lipid anchor (N-palmitoyl cysteine) is attached at C28. The S-diacylglycerol cysteine moiety is linked to residue C28. A helical membrane pass occupies residues 191–211; the sequence is GLAVVPHAVLVLSACGFKPGF.

The protein resides in the cell membrane. In Mycobacterium bovis (strain ATCC BAA-935 / AF2122/97), this protein is Putative lipoprotein LprH (lprH).